The following is a 447-amino-acid chain: Glutamate--tRNA ligase 2 (447 aa).

The short motif at 8 to 18 (PSPTGYLHVGN) is the 'HIGH' region element. Residues 239-243 (KLSKR) carry the 'KMSKS' region motif. Lys-242 contributes to the ATP binding site.

The protein belongs to the class-I aminoacyl-tRNA synthetase family. Glutamate--tRNA ligase type 1 subfamily. As to quaternary structure, monomer.

It is found in the cytoplasm. It carries out the reaction tRNA(Glu) + L-glutamate + ATP = L-glutamyl-tRNA(Glu) + AMP + diphosphate. Its function is as follows. Catalyzes the attachment of glutamate to tRNA(Glu) in a two-step reaction: glutamate is first activated by ATP to form Glu-AMP and then transferred to the acceptor end of tRNA(Glu). The chain is Glutamate--tRNA ligase 2 from Granulibacter bethesdensis (strain ATCC BAA-1260 / CGDNIH1).